Consider the following 247-residue polypeptide: MIDETRTTVDQSELDHFSRIATEWWNPQGKFRPLHQFNPTRLAYIREKICLEFNRDPVSLMPFDNLKILDIGCGGGLLCEPMARLGATVVGVDAAQTNIDVAKIHAAQNNLSIDYRTTTAEALANEGEKFDIILNMEVVEHVADVNLFINATAKMLKPQGLMFVATLNRTWKAWGFAIIGAEYILRWLPKGTHDYKKFLKPRELKNFLSKNALTVIDEIGITYNPLNDSWNRSKDMDVNYLLLAKRS.

4 residues coordinate S-adenosyl-L-methionine: Arg41, Gly72, Asp93, and Met136.

It belongs to the methyltransferase superfamily. UbiG/COQ3 family.

The enzyme catalyses a 3-demethylubiquinol + S-adenosyl-L-methionine = a ubiquinol + S-adenosyl-L-homocysteine + H(+). The catalysed reaction is a 3-(all-trans-polyprenyl)benzene-1,2-diol + S-adenosyl-L-methionine = a 2-methoxy-6-(all-trans-polyprenyl)phenol + S-adenosyl-L-homocysteine + H(+). Its pathway is cofactor biosynthesis; ubiquinone biosynthesis. In terms of biological role, O-methyltransferase that catalyzes the 2 O-methylation steps in the ubiquinone biosynthetic pathway. The sequence is that of Ubiquinone biosynthesis O-methyltransferase from Bartonella tribocorum (strain CIP 105476 / IBS 506).